Reading from the N-terminus, the 268-residue chain is D-alanyl-D-alanine carboxypeptidase (268 aa).

A helical membrane pass occupies residues 25 to 47; sequence AFLWAFIISFTVCTLFLGWRLVS. Substrate contacts are provided by residues glutamine 151, 179–181, and serine 186; that span reads WVA. 2 residues coordinate Zn(2+): histidine 188 and aspartate 195. Glutamate 238 (proton donor/acceptor) is an active-site residue. Residue histidine 241 coordinates Zn(2+).

This sequence belongs to the peptidase M15B family. Monomer. Zn(2+) is required as a cofactor.

Its subcellular location is the cell membrane. Its activity is regulated as follows. Carboxypeptidase activity is insensitive to beta-lactams since it is not affected by penicillin G or ampicillin and is inhibited only by very high concentrations of cefalotin and cefoxitin. Functionally, carboxypeptidase that cleaves the C-terminal D-alanine residue from the peptidoglycan-derived pentapeptide L-Ala-gamma-D-Glu-L-Lys-D-Ala-D-Ala in vitro. Therefore, should contribute in vivo to the hydrolysis of the D-alanyl-D-alanine-containing peptidoglycan precursors. May increase the level of glycopeptide antibiotics resistance by decreasing the availability of D-Ala-D-Ala termini from the cell surface, which constitute the antibiotic target residues. This Enterococcus faecalis (strain ATCC 700802 / V583) protein is D-alanyl-D-alanine carboxypeptidase.